A 429-amino-acid chain; its full sequence is UDP-N-acetylglucosamine 1-carboxyvinyltransferase (429 aa).

Position 22–23 (22–23) interacts with phosphoenolpyruvate; it reads KN. Position 93 (arginine 93) interacts with UDP-N-acetyl-alpha-D-glucosamine. Cysteine 117 serves as the catalytic Proton donor. Cysteine 117 bears the 2-(S-cysteinyl)pyruvic acid O-phosphothioketal mark. UDP-N-acetyl-alpha-D-glucosamine-binding positions include 122–126, aspartate 307, and valine 329; that span reads RPVDL.

This sequence belongs to the EPSP synthase family. MurA subfamily.

It is found in the cytoplasm. It catalyses the reaction phosphoenolpyruvate + UDP-N-acetyl-alpha-D-glucosamine = UDP-N-acetyl-3-O-(1-carboxyvinyl)-alpha-D-glucosamine + phosphate. The protein operates within cell wall biogenesis; peptidoglycan biosynthesis. In terms of biological role, cell wall formation. Adds enolpyruvyl to UDP-N-acetylglucosamine. This chain is UDP-N-acetylglucosamine 1-carboxyvinyltransferase, found in Chloroherpeton thalassium (strain ATCC 35110 / GB-78).